The chain runs to 638 residues: Polypeptide N-acetylgalactosaminyltransferase 15 (638 aa).

At 1-12 the chain is on the cytoplasmic side; sequence MLPRKRPRSGRS. A helical; Signal-anchor for type II membrane protein membrane pass occupies residues 13–35; sequence RLQFLLLFLTLGCVLMMVILLHP. At 36 to 638 the chain is on the lumenal side; it reads PPPTLHQAVT…FDQIHPVDER (603 aa). Positions 134-157 are disordered; that stretch reads KDWRTEEDGEESEEVLTPLGPDSD. Intrachain disulfides connect cysteine 181–cysteine 411, cysteine 402–cysteine 481, cysteine 516–cysteine 535, cysteine 561–cysteine 574, and cysteine 602–cysteine 619. A catalytic subdomain A region spans residues 190–299; the sequence is LPTASVILCF…PGWLEPLLSR (110 aa). Aspartate 231 and arginine 260 together coordinate substrate. Positions 283, 285, and 416 each coordinate Mn(2+). Residues 357–419 form a catalytic subdomain B region; sequence PVRSPVVPRE…PCSRVGHIYR (63 aa). Arginine 419 provides a ligand contact to substrate. The 128-residue stretch at 503–630 folds into the Ricin B-type lectin domain; sequence RFSGKLHNTG…GKTSQLWRFD (128 aa). A glycan (N-linked (GlcNAc...) asparagine) is linked at asparagine 573.

This sequence belongs to the glycosyltransferase 2 family. GalNAc-T subfamily. Requires Mn(2+) as cofactor. Specifically expressed in testis.

The protein localises to the golgi apparatus membrane. The catalysed reaction is L-seryl-[protein] + UDP-N-acetyl-alpha-D-galactosamine = a 3-O-[N-acetyl-alpha-D-galactosaminyl]-L-seryl-[protein] + UDP + H(+). The enzyme catalyses L-threonyl-[protein] + UDP-N-acetyl-alpha-D-galactosamine = a 3-O-[N-acetyl-alpha-D-galactosaminyl]-L-threonyl-[protein] + UDP + H(+). It functions in the pathway protein modification; protein glycosylation. Catalyzes the initial reaction in O-linked oligosaccharide biosynthesis, the transfer of an N-acetyl-D-galactosamine residue to a serine or threonine residue on the protein receptor. Although it displays a much weaker activity toward all substrates tested compared to GALNT2, it is able to transfer up to seven GalNAc residues to the Muc5AC peptide, suggesting that it can fill vicinal Thr/Ser residues in cooperation with other GALNT proteins. Prefers Muc1a as substrate. This Mus musculus (Mouse) protein is Polypeptide N-acetylgalactosaminyltransferase 15 (Galnt15).